Here is a 153-residue protein sequence, read N- to C-terminus: Aspartate carbamoyltransferase regulatory chain (153 aa).

Zn(2+) is bound by residues C109, C114, C135, and C138.

Belongs to the PyrI family. Contains catalytic and regulatory chains. Requires Zn(2+) as cofactor.

Its function is as follows. Involved in allosteric regulation of aspartate carbamoyltransferase. This Natronomonas pharaonis (strain ATCC 35678 / DSM 2160 / CIP 103997 / JCM 8858 / NBRC 14720 / NCIMB 2260 / Gabara) (Halobacterium pharaonis) protein is Aspartate carbamoyltransferase regulatory chain.